Reading from the N-terminus, the 304-residue chain is Phytol kinase 1, chloroplastic (304 aa).

A chloroplast-targeting transit peptide spans 1-59; the sequence is MAATLPLSPINHQLCRFGNNSLTTHRFCSPGFLISSPCFIGLTGMGSATQLRARRSLIS. A run of 6 helical transmembrane segments spans residues 71 to 91, 105 to 125, 129 to 149, 167 to 187, 191 to 211, and 227 to 247; these read VGAT…FESL, LVHI…SGST, YFAA…GLSI, ELLK…VFFW, PIGM…DIMG, and WAGS…LLYY.

Belongs to the polyprenol kinase family.

The protein resides in the plastid. It is found in the chloroplast membrane. The enzyme catalyses phytol + CTP = phytyl phosphate + CDP + H(+). It functions in the pathway cofactor biosynthesis; tocopherol biosynthesis. Functionally, kinase involved in the activation and reutilization of phytol from chlorophyll degradation in plant metabolism, including tocopherol biosynthesis. Catalyzes the conversion of phytol to phytol monophosphate (PMP) in the presence of CTP or UTP. No activity with ATP or GTP as phosphoryl donor. The chain is Phytol kinase 1, chloroplastic from Arabidopsis thaliana (Mouse-ear cress).